We begin with the raw amino-acid sequence, 583 residues long: Isocitrate dehydrogenase kinase/phosphatase (583 aa).

Residues 315–321 (APGIRGM) and Lys336 contribute to the ATP site. The active site involves Asp371.

The protein belongs to the AceK family.

The protein localises to the cytoplasm. The catalysed reaction is L-seryl-[isocitrate dehydrogenase] + ATP = O-phospho-L-seryl-[isocitrate dehydrogenase] + ADP + H(+). Its function is as follows. Bifunctional enzyme which can phosphorylate or dephosphorylate isocitrate dehydrogenase (IDH) on a specific serine residue. This is a regulatory mechanism which enables bacteria to bypass the Krebs cycle via the glyoxylate shunt in response to the source of carbon. When bacteria are grown on glucose, IDH is fully active and unphosphorylated, but when grown on acetate or ethanol, the activity of IDH declines drastically concomitant with its phosphorylation. The polypeptide is Isocitrate dehydrogenase kinase/phosphatase (Salmonella enteritidis PT4 (strain P125109)).